The chain runs to 80 residues: Exodeoxyribonuclease 7 small subunit (80 aa).

The protein belongs to the XseB family. As to quaternary structure, heterooligomer composed of large and small subunits.

It is found in the cytoplasm. It catalyses the reaction Exonucleolytic cleavage in either 5'- to 3'- or 3'- to 5'-direction to yield nucleoside 5'-phosphates.. Bidirectionally degrades single-stranded DNA into large acid-insoluble oligonucleotides, which are then degraded further into small acid-soluble oligonucleotides. This Pseudomonas paraeruginosa (strain DSM 24068 / PA7) (Pseudomonas aeruginosa (strain PA7)) protein is Exodeoxyribonuclease 7 small subunit.